The primary structure comprises 393 residues: 4-hydroxyphenylpyruvate dioxygenase (393 aa).

2 VOC domains span residues 17–148 (AFDH…LLER) and 179–339 (FLDH…IFSK). 3 residues coordinate Fe cation: H182, H267, and E350.

The protein belongs to the 4HPPD family. The cofactor is Fe cation. Expressed in the hypodermis and intestine.

The enzyme catalyses 3-(4-hydroxyphenyl)pyruvate + O2 = homogentisate + CO2. It functions in the pathway amino-acid degradation; L-phenylalanine degradation; acetoacetate and fumarate from L-phenylalanine: step 3/6. Its function is as follows. Key enzyme in the degradation of tyrosine. The polypeptide is 4-hydroxyphenylpyruvate dioxygenase (Caenorhabditis elegans).